A 308-amino-acid polypeptide reads, in one-letter code: Cytochrome b (308 aa).

4 helical membrane-spanning segments follow: residues F1–T21, W45–I66, W81–L101, and F146–T166. 2 residues coordinate heme b: H51 and H65. Residues H150 and H164 each contribute to the heme b site. H169 is an a ubiquinone binding site. 3 helical membrane-spanning segments follow: residues M194 to S214, L256 to H276, and L288 to S308.

Belongs to the cytochrome b family. In terms of assembly, the cytochrome bc1 complex contains 11 subunits: 3 respiratory subunits (MT-CYB, CYC1 and UQCRFS1), 2 core proteins (UQCRC1 and UQCRC2) and 6 low-molecular weight proteins (UQCRH/QCR6, UQCRB/QCR7, UQCRQ/QCR8, UQCR10/QCR9, UQCR11/QCR10 and a cleavage product of UQCRFS1). This cytochrome bc1 complex then forms a dimer. Heme b is required as a cofactor.

It localises to the mitochondrion inner membrane. In terms of biological role, component of the ubiquinol-cytochrome c reductase complex (complex III or cytochrome b-c1 complex) that is part of the mitochondrial respiratory chain. The b-c1 complex mediates electron transfer from ubiquinol to cytochrome c. Contributes to the generation of a proton gradient across the mitochondrial membrane that is then used for ATP synthesis. The polypeptide is Cytochrome b (MT-CYB) (Amblyornis macgregoriae (Macgregor's bowerbird)).